The primary structure comprises 609 residues: Alpha-glycerophosphate oxidase (609 aa).

21-49 contributes to the FAD binding site; the sequence is DLLVIGGGITGAGLTLQAAAAGMKVAVLE.

The protein belongs to the FAD-dependent glycerol-3-phosphate dehydrogenase family. Requires FAD as cofactor.

It is found in the cytoplasm. It carries out the reaction sn-glycerol 3-phosphate + O2 = dihydroxyacetone phosphate + H2O2. In Lactococcus lactis subsp. lactis (strain IL1403) (Streptococcus lactis), this protein is Alpha-glycerophosphate oxidase (glpO).